The sequence spans 489 residues: Dipeptide and tripeptide permease B (489 aa).

Residues 1-27 are Cytoplasmic-facing; the sequence is MNTTAPTGLLQQPRPFFMIFFVELWER. The chain crosses the membrane as a helical span at residues 28–48; that stretch reads FGYYGVQGILAVFFVKQLGFS. Residues 49 to 52 are Periplasmic-facing; the sequence is QEQA. Residues 53-73 traverse the membrane as a helical segment; it reads FITFGAFAALVYGLISIGGYV. Over 74 to 82 the chain is Cytoplasmic; that stretch reads GDHLLGTKR. Residues 83-103 form a helical membrane-spanning segment; it reads TLVLGAIVLAIGYFMTGMSLL. Residues 104-106 lie on the Periplasmic side of the membrane; sequence NPD. Residues 107–127 form a helical membrane-spanning segment; that stretch reads LIFIALGTIAVGNGLFKANPA. At 128 to 146 the chain is on the cytoplasmic side; sequence SLLSKCYQPKDPRLDGAFT. Residues 147–167 form a helical membrane-spanning segment; it reads LFYMSINIGSLLSLSLAPVIA. The Periplasmic portion of the chain corresponds to 168 to 172; it reads DKFGY. The helical transmembrane segment at 173–193 threads the bilayer; that stretch reads AVTYNLCGAGLIVALLVYFAC. At 194-214 the chain is on the cytoplasmic side; that stretch reads RGMVKNIGSEPDHKPLRFRNL. The chain crosses the membrane as a helical span at residues 215 to 235; sequence LLVLLGTVVMIFLCAWLMHNV. Lys236 is a topological domain (periplasmic). The chain crosses the membrane as a helical span at residues 237–257; it reads IANLVLIVLSIVVTIFFFREA. Residues 258 to 267 are Cytoplasmic-facing; it reads FRLDKTGRNK. Residues 268–288 form a helical membrane-spanning segment; that stretch reads MFVAFILMIEAVLFYILYAQM. The Periplasmic segment spans residues 289–315; sequence PTSLNFFAINNVHHEILGFAINPVSFQ. The helical transmembrane segment at 316-338 threads the bilayer; that stretch reads ALNPFWVVVASPVLAAIYTRLGS. The Cytoplasmic segment spans residues 339–348; sequence KGKDLTMPMK. Residues 349-369 traverse the membrane as a helical segment; sequence FTLGMFLCALGFLTAAAGMWF. The Periplasmic portion of the chain corresponds to 370–379; that stretch reads ADAQGLTSPW. The helical transmembrane segment at 380 to 400 threads the bilayer; sequence FIVLVYLFQSLGELLISALGL. At 401 to 410 the chain is on the cytoplasmic side; sequence AMVAALVPQH. Residues 411–431 traverse the membrane as a helical segment; sequence LMGFILGMWFLTQAAAFLLGG. Over 432–454 the chain is Periplasmic; it reads YVATFTAVPENITDPLQTLPIYT. Residues 455–475 traverse the membrane as a helical segment; sequence GVFSKIGLVTLAVTVVMAIMV. At 476-489 the chain is on the cytoplasmic side; the sequence is PWLNRMINTPGTEQ.

It belongs to the major facilitator superfamily. Proton-dependent oligopeptide transporter (POT/PTR) (TC 2.A.17) family. DtpB subfamily.

The protein localises to the cell inner membrane. In terms of biological role, proton-dependent permease that transports di- and tripeptides. The chain is Dipeptide and tripeptide permease B from Salmonella typhimurium (strain LT2 / SGSC1412 / ATCC 700720).